We begin with the raw amino-acid sequence, 333 residues long: Potassium channel protein 1 (333 aa).

The Cytoplasmic portion of the chain corresponds to 1–6; it reads METYEK. A helical membrane pass occupies residues 7–27; it reads IELGIIVIILLILIESVILMT. Residues 28–60 lie on the Extracellular side of the membrane; the sequence is VEGWDFFTAFYTAVVTISTVGYGDYTPQTFLGK. A Selectivity filter motif is present at residues 46 to 51; the sequence is TVGYGD. A helical membrane pass occupies residues 61-81; sequence LSVIIYIFAGVGAVAYTMGNI. Topologically, residues 82-333 are cytoplasmic; sequence ASFFIEGHFR…KLKRYVEGVE (252 aa). Residues 107–229 enclose the RCK N-terminal domain; that stretch reads NNHYIICGYG…GADRAVCPYI (123 aa). The RCK C-terminal domain occupies 246-331; the sequence is EFIHSLVATE…LEKLKRYVEG (86 aa).

As to quaternary structure, homotetramer.

Its subcellular location is the cell membrane. Its function is as follows. Potassium channel protein. Seems to conduct potassium at low membrane potentials. The polypeptide is Potassium channel protein 1 (Methanocaldococcus jannaschii (strain ATCC 43067 / DSM 2661 / JAL-1 / JCM 10045 / NBRC 100440) (Methanococcus jannaschii)).